The chain runs to 915 residues: MAKPETENPYSKTVLLPETSFPMKADLAKREPGQIKVWKDQKVFLNMKEIRKSKPSFVLHDGPPYANGNFHVGHSLNKILKDIIIKSKTLSGYQTDMIPGWDCHGLPIEVQVLKNLGKEARNTGPSELRKKCREYAAEFVGKQGEDLNRFLCFWDENNKYLTMAPEFEARIVEVFGSLFAKGYIYKGKKPVYWCIDLATAHAEAEIEYQNHVSPSIYVKFAVKGETDTHCLIWTTTPWTLPANLAICFNEELPYSLFQSDAHGRLILADGLKEAVEQKTGITLTKIKSLSNADLKQMVFLHPFLDRESIPLFGNHVTLDAGTGCVHTAPGHGTDDYRVGTAAGLPTLSPVDDYGRYTDEFEMMKGIKIWDANPKIVELLREKNALVHFSEFTHSYPHSWRSKKPLIFRATPQWFFSIDHNGLRDESLKAIDKVQWIPDWGITRIRSMVESRPDWCLSRQRNWGVPIPSFTCKSCGLTHLDDKTIQHFIQIVKKEGIEVWYEKEAKDLLPADTKCSNCGSEDLKQDKDILDVWFDSGVSSFAVFGDSIGKEPADLYLEGSDQHRGWFQSSLWPSMAIRKTPPYKSVLTHGYVLDEKGHAMSKSLGNVINPTTDIINQYGADILRLWVSTQDFRDDVKIGKDSIKTVSEAYRKIRNTFRYLLGNTSAETLTWNLKKEELDTIDKYYLHKLAKLNDEVKKLYDTYQFHQVYHKILGFCTVDLSQDYFEIIRDRMYCDAKESKTRRSSEYTLAVILEVLSKLLAPILSFTTEEVWTSFGKKDSVFYSDFSDLTEWLDESLESKMKPVFETKEDVQKALEEARKLGKLGKSLEAEVVIDGKKDSLPFSSEELALFFVVSHVHFETNGIQEVFSEWKGESGSIQIRKPKHFECPRCWRHVSETEGKLCKRCDEVVSKLSPN.

Positions 64–74 match the 'HIGH' region motif; the sequence is PYANGNFHVGH. Glutamate 557 contributes to the L-isoleucyl-5'-AMP binding site. Residues 598–602 carry the 'KMSKS' region motif; it reads AMSKS. Lysine 601 lines the ATP pocket. Zn(2+)-binding residues include cysteine 887, cysteine 890, cysteine 902, and cysteine 905.

It belongs to the class-I aminoacyl-tRNA synthetase family. IleS type 1 subfamily. As to quaternary structure, monomer. Requires Zn(2+) as cofactor.

The protein localises to the cytoplasm. The catalysed reaction is tRNA(Ile) + L-isoleucine + ATP = L-isoleucyl-tRNA(Ile) + AMP + diphosphate. Catalyzes the attachment of isoleucine to tRNA(Ile). As IleRS can inadvertently accommodate and process structurally similar amino acids such as valine, to avoid such errors it has two additional distinct tRNA(Ile)-dependent editing activities. One activity is designated as 'pretransfer' editing and involves the hydrolysis of activated Val-AMP. The other activity is designated 'posttransfer' editing and involves deacylation of mischarged Val-tRNA(Ile). The sequence is that of Isoleucine--tRNA ligase from Leptospira biflexa serovar Patoc (strain Patoc 1 / ATCC 23582 / Paris).